The following is a 1050-amino-acid chain: NAD-specific glutamate dehydrogenase (1050 aa).

The disordered stretch occupies residues 1 to 39 (MDSPSAPVPAHKLVDRLKDQTPRHPSPQPTHVSYPKVNG). Over residues 12 to 22 (KLVDRLKDQTP) the composition is skewed to basic and acidic residues. The active site involves Lys-594.

It belongs to the Glu/Leu/Phe/Val dehydrogenases family. Homotetramer.

It catalyses the reaction L-glutamate + NAD(+) + H2O = 2-oxoglutarate + NH4(+) + NADH + H(+). The chain is NAD-specific glutamate dehydrogenase (gdh-1) from Neurospora crassa (strain ATCC 24698 / 74-OR23-1A / CBS 708.71 / DSM 1257 / FGSC 987).